The primary structure comprises 186 residues: Elongation factor P (186 aa).

The protein belongs to the elongation factor P family.

It localises to the cytoplasm. The protein operates within protein biosynthesis; polypeptide chain elongation. Involved in peptide bond synthesis. Stimulates efficient translation and peptide-bond synthesis on native or reconstituted 70S ribosomes in vitro. Probably functions indirectly by altering the affinity of the ribosome for aminoacyl-tRNA, thus increasing their reactivity as acceptors for peptidyl transferase. The sequence is that of Elongation factor P from Prochlorococcus marinus subsp. pastoris (strain CCMP1986 / NIES-2087 / MED4).